Here is a 185-residue protein sequence, read N- to C-terminus: Putative lipoprotein LprB (185 aa).

The signal sequence occupies residues 1–24 (MRRKVRRLTLAVSALVALFPAVAG). A lipid anchor (N-palmitoyl cysteine) is attached at cysteine 25. Cysteine 25 is lipidated: S-diacylglycerol cysteine. The interval 26–50 (SDSGDNKPGATIPSTPANAEGRHGP) is disordered.

The protein localises to the cell membrane. The chain is Putative lipoprotein LprB (lprB) from Mycobacterium tuberculosis (strain CDC 1551 / Oshkosh).